A 160-amino-acid polypeptide reads, in one-letter code: 2-C-methyl-D-erythritol 2,4-cyclodiphosphate synthase (160 aa).

A divalent metal cation is bound by residues Asp11 and His13. 4-CDP-2-C-methyl-D-erythritol 2-phosphate is bound by residues 11–13 (DVH) and 37–38 (HS). A divalent metal cation is bound at residue His45. 4-CDP-2-C-methyl-D-erythritol 2-phosphate-binding positions include 59-61 (DIG) and Arg145.

Belongs to the IspF family. Homotrimer. Requires a divalent metal cation as cofactor.

The catalysed reaction is 4-CDP-2-C-methyl-D-erythritol 2-phosphate = 2-C-methyl-D-erythritol 2,4-cyclic diphosphate + CMP. It participates in isoprenoid biosynthesis; isopentenyl diphosphate biosynthesis via DXP pathway; isopentenyl diphosphate from 1-deoxy-D-xylulose 5-phosphate: step 4/6. Involved in the biosynthesis of isopentenyl diphosphate (IPP) and dimethylallyl diphosphate (DMAPP), two major building blocks of isoprenoid compounds. Catalyzes the conversion of 4-diphosphocytidyl-2-C-methyl-D-erythritol 2-phosphate (CDP-ME2P) to 2-C-methyl-D-erythritol 2,4-cyclodiphosphate (ME-CPP) with a corresponding release of cytidine 5-monophosphate (CMP). This chain is 2-C-methyl-D-erythritol 2,4-cyclodiphosphate synthase, found in Neisseria gonorrhoeae (strain ATCC 700825 / FA 1090).